A 382-amino-acid polypeptide reads, in one-letter code: S-adenosylmethionine synthase (382 aa).

Histidine 16 serves as a coordination point for ATP. Aspartate 18 serves as a coordination point for Mg(2+). Residue glutamate 44 participates in K(+) binding. Residues glutamate 57 and glutamine 100 each coordinate L-methionine. Positions 100 to 110 (QSPDIAQGVDN) are flexible loop. Residues 165 to 167 (DAK), 231 to 232 (RF), aspartate 240, 246 to 247 (RK), and lysine 267 each bind ATP. An L-methionine-binding site is contributed by aspartate 240. An L-methionine-binding site is contributed by lysine 271.

Belongs to the AdoMet synthase family. Homotetramer; dimer of dimers. Mg(2+) serves as cofactor. Requires K(+) as cofactor.

Its subcellular location is the cytoplasm. The enzyme catalyses L-methionine + ATP + H2O = S-adenosyl-L-methionine + phosphate + diphosphate. Its pathway is amino-acid biosynthesis; S-adenosyl-L-methionine biosynthesis; S-adenosyl-L-methionine from L-methionine: step 1/1. Its function is as follows. Catalyzes the formation of S-adenosylmethionine (AdoMet) from methionine and ATP. The overall synthetic reaction is composed of two sequential steps, AdoMet formation and the subsequent tripolyphosphate hydrolysis which occurs prior to release of AdoMet from the enzyme. This chain is S-adenosylmethionine synthase, found in Legionella pneumophila (strain Lens).